Reading from the N-terminus, the 123-residue chain is Transmembrane protein 049L (123 aa).

A run of 2 helical transmembrane segments spans residues 67 to 87 (VFGA…LWLV) and 104 to 121 (LSLQ…GVYN).

The protein resides in the membrane. This Acheta domesticus (House cricket) protein is Transmembrane protein 049L.